The sequence spans 200 residues: Large ribosomal subunit protein uL13 (200 aa).

The protein belongs to the universal ribosomal protein uL13 family. In terms of assembly, component of the large ribosomal subunit. Mature ribosomes consist of a small (40S) and a large (60S) subunit. The 40S subunit contains about 32 different proteins and 1 molecule of RNA (18S). The 60S subunit contains 45 different proteins and 3 molecules of RNA (25S, 5.8S and 5S).

The protein resides in the cytoplasm. Functionally, component of the ribosome, a large ribonucleoprotein complex responsible for the synthesis of proteins in the cell. The small ribosomal subunit (SSU) binds messenger RNAs (mRNAs) and translates the encoded message by selecting cognate aminoacyl-transfer RNA (tRNA) molecules. The large subunit (LSU) contains the ribosomal catalytic site termed the peptidyl transferase center (PTC), which catalyzes the formation of peptide bonds, thereby polymerizing the amino acids delivered by tRNAs into a polypeptide chain. The nascent polypeptides leave the ribosome through a tunnel in the LSU and interact with protein factors that function in enzymatic processing, targeting, and the membrane insertion of nascent chains at the exit of the ribosomal tunnel. The sequence is that of Large ribosomal subunit protein uL13 from Candida albicans (strain SC5314 / ATCC MYA-2876) (Yeast).